The sequence spans 715 residues: Fatty acid oxidation complex subunit alpha (715 aa).

The enoyl-CoA hydratase stretch occupies residues 1–190; the sequence is MTTTSAFMLN…KAGLVDDVVP (190 aa). The tract at residues 306–714 is 3-hydroxyacyl-CoA dehydrogenase; it reads GPLNSVGILG…FWTNGETDQG (409 aa).

The protein in the N-terminal section; belongs to the enoyl-CoA hydratase/isomerase family. This sequence in the central section; belongs to the 3-hydroxyacyl-CoA dehydrogenase family. As to quaternary structure, heterotetramer of two alpha chains (FadJ) and two beta chains (FadI).

The protein resides in the cytoplasm. It catalyses the reaction a (3S)-3-hydroxyacyl-CoA = a (2E)-enoyl-CoA + H2O. The enzyme catalyses a 4-saturated-(3S)-3-hydroxyacyl-CoA = a (3E)-enoyl-CoA + H2O. The catalysed reaction is a (3S)-3-hydroxyacyl-CoA + NAD(+) = a 3-oxoacyl-CoA + NADH + H(+). It carries out the reaction (3S)-3-hydroxybutanoyl-CoA = (3R)-3-hydroxybutanoyl-CoA. It participates in lipid metabolism; fatty acid beta-oxidation. Functionally, catalyzes the formation of a hydroxyacyl-CoA by addition of water on enoyl-CoA. Also exhibits 3-hydroxyacyl-CoA epimerase and 3-hydroxyacyl-CoA dehydrogenase activities. This chain is Fatty acid oxidation complex subunit alpha, found in Salmonella choleraesuis (strain SC-B67).